Reading from the N-terminus, the 79-residue chain is Cell division protein ZapB (79 aa).

Residues 6–78 (FEKLEVKVQQ…LRALLGKMEE (73 aa)) are a coiled coil.

The protein belongs to the ZapB family. As to quaternary structure, homodimer. The ends of the coiled-coil dimer bind to each other, forming polymers. Interacts with FtsZ.

It is found in the cytoplasm. Non-essential, abundant cell division factor that is required for proper Z-ring formation. It is recruited early to the divisome by direct interaction with FtsZ, stimulating Z-ring assembly and thereby promoting cell division earlier in the cell cycle. Its recruitment to the Z-ring requires functional FtsA or ZipA. The chain is Cell division protein ZapB from Yersinia enterocolitica serotype O:8 / biotype 1B (strain NCTC 13174 / 8081).